Consider the following 1074-residue polypeptide: Isoleucine--tRNA ligase (1074 aa).

The 'HIGH' region motif lies at 50-60 (PYTSGAAHMGT). A 'KMSKS' region motif is present at residues 605–609 (GMSKS). Lys-608 contributes to the ATP binding site.

It belongs to the class-I aminoacyl-tRNA synthetase family. IleS type 2 subfamily. As to quaternary structure, monomer. The cofactor is Zn(2+).

It localises to the cytoplasm. It carries out the reaction tRNA(Ile) + L-isoleucine + ATP = L-isoleucyl-tRNA(Ile) + AMP + diphosphate. Its function is as follows. Catalyzes the attachment of isoleucine to tRNA(Ile). As IleRS can inadvertently accommodate and process structurally similar amino acids such as valine, to avoid such errors it has two additional distinct tRNA(Ile)-dependent editing activities. One activity is designated as 'pretransfer' editing and involves the hydrolysis of activated Val-AMP. The other activity is designated 'posttransfer' editing and involves deacylation of mischarged Val-tRNA(Ile). The sequence is that of Isoleucine--tRNA ligase from Haloarcula marismortui (strain ATCC 43049 / DSM 3752 / JCM 8966 / VKM B-1809) (Halobacterium marismortui).